We begin with the raw amino-acid sequence, 199 residues long: Probable GTP-binding protein EngB (199 aa).

Positions 22-196 (NWPEFAFSGR…GKFILDLVDS (175 aa)) constitute an EngB-type G domain. Residues 30 to 37 (GRSNVGKS), 57 to 61 (GRTQS), 75 to 78 (DLPG), 142 to 145 (TKVD), and 175 to 177 (FSA) contribute to the GTP site. Residues Ser37 and Thr59 each coordinate Mg(2+).

Belongs to the TRAFAC class TrmE-Era-EngA-EngB-Septin-like GTPase superfamily. EngB GTPase family. The cofactor is Mg(2+).

Its function is as follows. Necessary for normal cell division and for the maintenance of normal septation. The sequence is that of Probable GTP-binding protein EngB from Halothermothrix orenii (strain H 168 / OCM 544 / DSM 9562).